Reading from the N-terminus, the 343-residue chain is DNA repair and recombination protein RadA (343 aa).

An ATP-binding site is contributed by 107-114 (GEFGAGKS).

It belongs to the eukaryotic RecA-like protein family.

Its function is as follows. Involved in DNA repair and in homologous recombination. Binds and assemble on single-stranded DNA to form a nucleoprotein filament. Hydrolyzes ATP in a ssDNA-dependent manner and promotes DNA strand exchange between homologous DNA molecules. The polypeptide is DNA repair and recombination protein RadA (Haloquadratum walsbyi (strain DSM 16790 / HBSQ001)).